The sequence spans 222 residues: MARLNINPTRMEMTRLKKLLKTATRGHKLLKDKLDELMKQFLEIVRENKRLREEAENALDTAYKNFIIARAVMSQEYLGSALMMPKQSVSVDVSTRNIMSVDVPVFDFKTENNQSDIYPYGLAFTSGELDSAMEAFSDAMQPLLRLAESEKSAQLLAQEIEKTRRRVNALENVMIPNYIETIKYIAMKLEENERASTTRLMKVKDMVLKKALEEKKKNDLVV.

The protein belongs to the V-ATPase D subunit family.

Produces ATP from ADP in the presence of a proton gradient across the membrane. The sequence is that of V-type ATP synthase subunit D from Clostridioides difficile (strain 630) (Peptoclostridium difficile).